The following is a 307-amino-acid chain: Oxygen-dependent coproporphyrinogen-III oxidase (307 aa).

Residue serine 99 participates in substrate binding. The a divalent metal cation site is built by histidine 103 and histidine 113. The active-site Proton donor is histidine 113. A substrate-binding site is contributed by 115–117 (NVR). Histidine 152 and histidine 182 together coordinate a divalent metal cation. Residues 247 to 282 (YVEFNLVFDRGTLFGLQSGGRTESILMSMPPVANWR) form an important for dimerization region. 265 to 267 (GGR) lines the substrate pocket.

The protein belongs to the aerobic coproporphyrinogen-III oxidase family. As to quaternary structure, homodimer. A divalent metal cation serves as cofactor.

Its subcellular location is the cytoplasm. The enzyme catalyses coproporphyrinogen III + O2 + 2 H(+) = protoporphyrinogen IX + 2 CO2 + 2 H2O. It participates in porphyrin-containing compound metabolism; protoporphyrin-IX biosynthesis; protoporphyrinogen-IX from coproporphyrinogen-III (O2 route): step 1/1. Functionally, involved in the heme biosynthesis. Catalyzes the aerobic oxidative decarboxylation of propionate groups of rings A and B of coproporphyrinogen-III to yield the vinyl groups in protoporphyrinogen-IX. The chain is Oxygen-dependent coproporphyrinogen-III oxidase from Burkholderia multivorans (strain ATCC 17616 / 249).